Consider the following 122-residue polypeptide: Small ribosomal subunit protein uS13 (122 aa).

A disordered region spans residues 95 to 122 (GLPVRGQRTHTNARTRKGPAKPIAGKKK).

Belongs to the universal ribosomal protein uS13 family. In terms of assembly, part of the 30S ribosomal subunit. Forms a loose heterodimer with protein S19. Forms two bridges to the 50S subunit in the 70S ribosome.

Located at the top of the head of the 30S subunit, it contacts several helices of the 16S rRNA. In the 70S ribosome it contacts the 23S rRNA (bridge B1a) and protein L5 of the 50S subunit (bridge B1b), connecting the 2 subunits; these bridges are implicated in subunit movement. Contacts the tRNAs in the A and P-sites. This chain is Small ribosomal subunit protein uS13, found in Caulobacter vibrioides (strain ATCC 19089 / CIP 103742 / CB 15) (Caulobacter crescentus).